Consider the following 232-residue polypeptide: Lipoprotein-releasing system ATP-binding protein LolD 2 (232 aa).

The ABC transporter domain maps to 11–231 (VYLHDIKRQY…SLQDGVVVEL (221 aa)). 47–54 (APSGSGKS) contributes to the ATP binding site.

It belongs to the ABC transporter superfamily. Lipoprotein translocase (TC 3.A.1.125) family. In terms of assembly, the complex is composed of two ATP-binding proteins (LolD) and two transmembrane proteins (LolC and LolE).

The protein resides in the cell inner membrane. Part of the ABC transporter complex LolCDE involved in the translocation of mature outer membrane-directed lipoproteins, from the inner membrane to the periplasmic chaperone, LolA. Responsible for the formation of the LolA-lipoprotein complex in an ATP-dependent manner. This chain is Lipoprotein-releasing system ATP-binding protein LolD 2, found in Rhodopseudomonas palustris (strain ATCC BAA-98 / CGA009).